The sequence spans 887 residues: ATP-dependent DNA helicase srs2 (887 aa).

Residues 9–304 (KFLNEEQRIS…LHLERNYRSA (296 aa)) form the UvrD-like helicase ATP-binding domain. ATP is bound by residues 33 to 38 (GSGKTR) and Arg-302. A UvrD-like helicase C-terminal domain is found at 305–597 (KPILELALSI…TISTLHAAKG (293 aa)).

It belongs to the helicase family. UvrD subfamily.

Its subcellular location is the nucleus. It carries out the reaction Couples ATP hydrolysis with the unwinding of duplex DNA by translocating in the 3'-5' direction.. It catalyses the reaction ATP + H2O = ADP + phosphate + H(+). Functionally, ATP-dependent DNA helicase involved in DNA repair at least for UV-induced lesions. Also aids the recombinational repair of camptothecin-induced collapsed replication forks. The polypeptide is ATP-dependent DNA helicase srs2 (srs2) (Schizosaccharomyces pombe (strain 972 / ATCC 24843) (Fission yeast)).